Here is a 363-residue protein sequence, read N- to C-terminus: Alanine racemase (363 aa).

Residue Lys35 is the Proton acceptor; specific for D-alanine of the active site. An N6-(pyridoxal phosphate)lysine modification is found at Lys35. Arg134 contacts substrate. Catalysis depends on Tyr259, which acts as the Proton acceptor; specific for L-alanine. Substrate is bound at residue Met307.

Belongs to the alanine racemase family. Pyridoxal 5'-phosphate is required as a cofactor.

It carries out the reaction L-alanine = D-alanine. It participates in amino-acid biosynthesis; D-alanine biosynthesis; D-alanine from L-alanine: step 1/1. Catalyzes the interconversion of L-alanine and D-alanine. May also act on other amino acids. This Shewanella denitrificans (strain OS217 / ATCC BAA-1090 / DSM 15013) protein is Alanine racemase (alr).